Here is a 757-residue protein sequence, read N- to C-terminus: MPVDKQAKRKKSISSNEVELLYTKSKTYLHPTTSKKDNIPGYLSLSRGANAANRDIIISFMSEKQLSSEELKAYENVDIADLQDDLEALKLGGTNSRSSGKRNLNIVSKPPTSSAFGFCFSIPISFVYSIQVRKPSVGWWFGSIIINTQDGEKLPIVFFHDDESPSTLKNQKVRNQRFDPFGDNGEMYWGGSDFMNALGKFADVQKSSVEPSVYLINPESNDLRNFAPFKEPKTAKTETNQEPFKLPDVNKFFANAKWKVLETVATFSAKTRNQVLDLVDENAPMPIKQIINKPEVQKIGNEFDSARVYLAKWAAQVKEEAEEAHRKYQLDDEIYNKINKELGVGSNTEILTDEEVSKTSRRKPISKVEWEGLFDFSGRLIISIDEIKDRIFHGGLEDCIRGEAWLFLLNVYPWDSSAEERKTLRNSFQTAYEEIKLKWVNDDDKRSVDFWKDQKHRIEKDINRTDRNLSIFQNKKKISISGVGSDRLPTTRESSPETPDEADDDEFDVSNITNPHLFKMREILLTYNEHNVNLGYVQGMTDLLSPLYVTFQDESLTFWAFVNFMDRMERNFLRDQSGMKNQMLTLNELVQFMLPDLFKHLEKCESTDLYFFFRMLLVWFKREFEWSSVLSLWEILWTDYYSGQFHLFFALAVLSDNERIIRQNLSRFDEVLKYMNDLSMNMNLNHLLIRAELLFLRFRRMIDIIDRENSLKKLNNPGVYDDANNSLIKISPALRELLSKKPVIQKETERPEGVGGG.

In terms of domain architecture, Rab-GAP TBC spans 395–640 (GLEDCIRGEA…SLWEILWTDY (246 aa)). The tract at residues 482-507 (GVGSDRLPTTRESSPETPDEADDDEF) is disordered. Positions 498–507 (TPDEADDDEF) are enriched in acidic residues.

Its function is as follows. Most effectively accelerate the intrinsic GTPase activity of YPT7. It is also active, but to a lesser extent, on YPT31, YPT32 and YPT1. YPT6 and SEC4. This chain is GTPase-activating protein GYP7 (GYP7), found in Debaryomyces hansenii (strain ATCC 36239 / CBS 767 / BCRC 21394 / JCM 1990 / NBRC 0083 / IGC 2968) (Yeast).